A 214-amino-acid polypeptide reads, in one-letter code: Clavatol biosynthesis cluster protein B (214 aa).

Residues 1 to 17 (MAALSFQCLCVASAVRA) form the signal peptide. N-linked (GlcNAc...) asparagine glycosylation is found at Asn-103 and Asn-204.

Its pathway is secondary metabolite biosynthesis. Part of the cla gene cluster that produces clavatol and ortho-quinone methide. The clavatol biosynthesis cluster cla and the terrestric acid cluster tra are both involved in the production of peniphenones and penilactones. The non-reducing PKS claF is responsible for the formation of clavatol from successive condensations of 3 malonyl-CoA units, presumably with a simple acetyl-CoA starter unit, and 2 methylation steps. The esterase claE probably collaborates with claF by catalyzing the hydrolysis of ACP-bound acyl intermediates to free the ACP from stalled intermediates. The clavatol oxidase claD then converts clavatol to hydroxyclavatol. Spontaneous dehydration of hydroxyclavatol leads to the accumulation of the highly active ortho-quinone methide. On the other hand, the PKS-NRPS hybrid traA is involved in the formation of crustosic acid, with the help of traB and traD. The polyketide synthase module (PKS) of traA is responsible for the synthesis of the polyketide backbone via the condensation of an acetyl-CoA starter unit with 3 malonyl-CoA units. The downstream nonribosomal peptide synthetase (NRPS) module then amidates the carboxyl end of the polyketide with L-malic acid. Because traA lacks a designated enoylreductase (ER) domain, the required activity is provided the enoyl reductase traG. Crustosic acid undergoes decarboxylation and isomerization to the terrestric acid, catalyzed by the 2-oxoglutarate-dependent dioxygenase traH. Both acids are further converted to the 2 gamma-butyrolactones (R)-5-methyltetronic acid and (S)-5-carboxylmethyltetronic acid, with involvement of the cytochrome P450 monooxygenase claJ. Spontaneous addition of the methide to these gamma-butyrolactones leads to peniphenone D and penilactone D, which undergo again stereospecific attacking by methide to give penilactones A and B. The function of claB has not been investigated yet. This chain is Clavatol biosynthesis cluster protein B, found in Penicillium crustosum (Blue mold fungus).